Here is a 151-residue protein sequence, read N- to C-terminus: Transcriptional regulator MraZ (151 aa).

2 SpoVT-AbrB domains span residues 5 to 52 (ANAI…PLDE) and 81 to 124 (AVDL…DEDA).

It belongs to the MraZ family. Forms oligomers.

The protein localises to the cytoplasm. It localises to the nucleoid. The polypeptide is Transcriptional regulator MraZ (Pseudomonas fluorescens (strain Pf0-1)).